Reading from the N-terminus, the 770-residue chain is Transducin-like enhancer protein 1 (770 aa).

A q domain region spans residues 1 to 131; sequence MFPQSRHPTP…IIGQQQLQAQ (131 aa). 2 disordered regions span residues 128 to 157 and 176 to 346; these read LQAQ…GIPP and HLAI…PAME. Positions 132–199 are GP domain; the sequence is HLSHGHGPPV…RHRDRESGTS (68 aa). A compositionally biased stretch (low complexity) spans 146 to 157; that stretch reads HPSGLQPPGIPP. 2 stretches are compositionally biased toward basic and acidic residues: residues 178-196 and 209-244; these read AIKD…DRES and RSTD…KSDD. The ccN domain stretch occupies residues 200 to 266; that stretch reads NSLLVPDSLR…SPHASPTHSP (67 aa). The Nuclear localization signal signature appears at 225 to 228; sequence KKRK. Position 237 is a phosphoserine; by CK2 (Ser-237). Residues 255 to 264 show a composition bias toward low complexity; it reads PSSPHASPTH. Residues Ser-257, Ser-261, and Ser-265 each carry the phosphoserine; by CDK1 modification. A compositionally biased stretch (basic and acidic residues) spans 265–281; the sequence is SPRENGIDKNRLLKKDA. An SP domain region spans residues 267-450; the sequence is RENGIDKNRL…GGKPAYSFHV (184 aa). Residues 282-297 are compositionally biased toward low complexity; that stretch reads SGSPASTASSGSSSSL. Phosphoserine is present on Ser-284. Basic and acidic residues predominate over residues 298 to 308; it reads KSKEVSLHEKA. 6 WD repeats span residues 470–501, 528–558, 572–602, 614–644, 696–726, and 737–767; these read GIPR…HVYT, NRDN…SIWD, SSAP…AVWD, GHTD…RSWD, LHES…NAWR, and KESS…TVYE.

It belongs to the WD repeat Groucho/TLE family. Homooligomer and heterooligomer with other family members. Binds RUNX1, RUNX3, FOXA2, KDM6A, UTY, histone H3, HESX1, ESRRG and the NF-kappa-B subunit RELA. Interacts with HES1 (via WRPW motif). Binds TCF7, LEF1, TCF7L1 and TCF7L2. Interacts with SIX3. Interacts with EFNB1. Interacts with TLE4. Interacts with FOXG1/BF-1; the interaction is inhibited by TLE6/GRG6. Phosphorylated, probably by CDK1. The degree of phosphorylation varies throughout the cell cycle, and is highest at the G2/M transition. Becomes hyperphosphorylated in response to cell differentiation and interaction with HES1 or RUNX1. Post-translationally, ubiquitinated by XIAP/BIRC4. In terms of tissue distribution, highly expressed in liver and lung. Detected at slightly lower levels in heart, brain, kidney and testis. Detected in fetal and adult stomach and small intestine, in adult ileum, duodenum and colon. Expressed in bone marrow-derived macrophages. Most abundant at the base of the crypts of Lieberkuhn in the small intestine.

Its subcellular location is the nucleus. The protein resides in the cytoplasm. Functionally, transcriptional corepressor that binds to a number of transcription factors. Inhibits NF-kappa-B-regulated gene expression. Inhibits the transcriptional activation mediated by FOXA2, and by CTNNB1 and TCF family members in Wnt signaling. Enhances FOXG1/BF-1- and HES1-mediated transcriptional repression. The effects of full-length TLE family members may be modulated by association with dominant-negative AES. Unusual function as coactivator for ESRRG. This chain is Transducin-like enhancer protein 1 (Tle1), found in Mus musculus (Mouse).